The following is a 216-amino-acid chain: Acetate CoA-transferase subunit beta (216 aa).

Glu46 is an active-site residue.

It belongs to the 3-oxoacid CoA-transferase subunit B family. As to quaternary structure, heterotetramer composed of two alpha subunits (AtoD) and two beta subunits (AtoA).

It is found in the cytoplasm. It carries out the reaction an acyl-CoA + acetate = a carboxylate + acetyl-CoA. It catalyses the reaction acetoacetate + acetyl-CoA = acetoacetyl-CoA + acetate. The enzyme catalyses butanoate + acetyl-CoA = butanoyl-CoA + acetate. The catalysed reaction is acetoacetate + butanoyl-CoA = acetoacetyl-CoA + butanoate. It functions in the pathway lipid metabolism; short-chain fatty acid metabolism. With respect to regulation, inhibited by p-chloromercuribenzoate. Its function is as follows. Coenzyme A transferase which is involved in short-chain fatty acid degradation and catalyzes the activation of short-chain fatty acids to their respective CoA thiolesters. During acetoacetate degradation, catalyzes the transfer of CoA from acetyl-CoA to acetoacetate by a mechanism involving a covalent enzyme-CoA compound as a reaction intermediate. Utilizes a variety of short chain acyl-CoA and carboxylic acid substrates but exhibits maximal activity with normal and 3-keto substrates. This is Acetate CoA-transferase subunit beta from Escherichia coli (strain K12).